We begin with the raw amino-acid sequence, 1612 residues long: DNA topoisomerase 2-beta (1612 aa).

A2 carries the N-acetylalanine modification. At K3 the chain carries N6-acetyllysine. Glycyl lysine isopeptide (Lys-Gly) (interchain with G-Cter in SUMO2) cross-links involve residues K21 and K22. ATP is bound by residues N100, N129, and 157–159; that span reads SSN. Residues K165 and K166 each participate in a glycyl lysine isopeptide (Lys-Gly) (interchain with G-Cter in SUMO2) cross-link. Residue 170-177 participates in ATP binding; that stretch reads GRNGYGAK. Residues K216 and K287 each participate in a glycyl lysine isopeptide (Lys-Gly) (interchain with G-Cter in SUMO2) cross-link. Positions 351–353 are interaction with DNA; that stretch reads KKK. Residues K355 and K361 each participate in a glycyl lysine isopeptide (Lys-Gly) (interchain with G-Cter in SUMO2) cross-link. 385–387 provides a ligand contact to ATP; that stretch reads QTK. Glycyl lysine isopeptide (Lys-Gly) (interchain with G-Cter in SUMO2) cross-links involve residues K425, K427, and K434. Positions 464-581 constitute a Toprim domain; the sequence is CTLILTEGDS…SLLKHGFLEE (118 aa). Mg(2+)-binding residues include E470, D550, and D552. Glycyl lysine isopeptide (Lys-Gly) (interchain with G-Cter in SUMO2) cross-links involve residues K588, K593, K623, K631, K634, K664, and K700. The Topo IIA-type catalytic domain maps to 724–1177; the sequence is IPSLVDGFKP…SPSDLWKEDL (454 aa). Y814 acts as the O-(5'-phospho-DNA)-tyrosine intermediate in catalysis. The interaction with DNA stretch occupies residues 999–1008; the sequence is KLQTTLTCNS. K1080 is covalently cross-linked (Glycyl lysine isopeptide (Lys-Gly) (interchain with G-Cter in SUMO2)). The disordered stretch occupies residues 1098-1128; that stretch reads AWKEAQEKAAEEEDSQNQHDDSSSDSGTPSG. Residues K1202, K1205, K1214, and K1215 each participate in a glycyl lysine isopeptide (Lys-Gly) (interchain with G-Cter in SUMO2) cross-link. Residue S1224 is modified to Phosphoserine. Glycyl lysine isopeptide (Lys-Gly) (interchain with G-Cter in SUMO2) cross-links involve residues K1238, K1250, and K1259. Residues 1245–1586 are disordered; it reads LLKKKKGDPD…FTSEPPALPR (342 aa). Phosphothreonine is present on T1280. Residues K1311 and K1315 each participate in a glycyl lysine isopeptide (Lys-Gly) (interchain with G-Cter in SUMO2) cross-link. 2 stretches are compositionally biased toward basic and acidic residues: residues 1322 to 1332 and 1346 to 1358; these read PWSDDESKSES and SLLR…RPKY. Phosphoserine is present on residues S1324, S1328, S1330, S1332, and S1346. Position 1358 is a phosphotyrosine (Y1358). Over residues 1362–1379 the composition is skewed to acidic residues; that stretch reads FSEEEDDDAAAADDSNDL. Phosphoserine is present on residues S1363 and S1376. A Glycyl lysine isopeptide (Lys-Gly) (interchain with G-Cter in SUMO2) cross-link involves residue K1385. S1387 bears the Phosphoserine mark. A Phosphothreonine modification is found at T1390. S1400 bears the Phosphoserine mark. Position 1408 is a phosphotyrosine (Y1408). S1411 is modified (phosphoserine). Positions 1417 to 1429 are enriched in basic and acidic residues; it reads ATPEKSSNDKKSQ. K1427 is covalently cross-linked (Glycyl lysine isopeptide (Lys-Gly) (interchain with G-Cter in SUMO2)). Phosphoserine is present on residues S1428, S1439, and S1441. A Glycyl lysine isopeptide (Lys-Gly) (interchain with G-Cter in SUMO2) cross-link involves residue K1443. Residues 1443–1453 are compositionally biased toward basic and acidic residues; sequence KSEDDSAKFDS. S1448, S1453, and S1460 each carry phosphoserine. Residue K1477 forms a Glycyl lysine isopeptide (Lys-Gly) (interchain with G-Cter in SUMO2) linkage. An interaction with PLSCR1 region spans residues 1493-1499; it reads KAKRAPK. Phosphoserine occurs at positions 1509, 1511, and 1513. A compositionally biased stretch (basic residues) spans 1526–1536; it reads GKGRGAKKRKA. Phosphoserine occurs at positions 1537 and 1539. Residues 1550–1561 show a composition bias toward basic residues; the sequence is KPSKTASKKPKK. T1562 is modified (phosphothreonine). A phosphoserine mark is found at S1563 and S1568. The residue at position 1596 (Y1596) is a Phosphotyrosine. S1600 bears the Phosphoserine mark.

It belongs to the type II topoisomerase family. As to quaternary structure, homodimer. Interacts with KIAA1210. Interacts with PLSCR1. Mg(2+) is required as a cofactor. Mn(2+) serves as cofactor. It depends on Ca(2+) as a cofactor.

The protein resides in the nucleus. It localises to the nucleolus. Its subcellular location is the nucleoplasm. It carries out the reaction ATP-dependent breakage, passage and rejoining of double-stranded DNA.. Functionally, key decatenating enzyme that alters DNA topology by binding to two double-stranded DNA molecules, generating a double-stranded break in one of the strands, passing the intact strand through the broken strand, and religating the broken strand. Plays a role in B-cell differentiation. The protein is DNA topoisomerase 2-beta (Top2b) of Mus musculus (Mouse).